Consider the following 458-residue polypeptide: Zinc finger protein 239 (458 aa).

A Glycyl lysine isopeptide (Lys-Gly) (interchain with G-Cter in SUMO2) cross-link involves residue K108. Position 191 is a phosphoserine (S191). 9 consecutive C2H2-type zinc fingers follow at residues 207–229 (YECSQCGKNFSQSSELLLHQRDH), 235–257 (YKCEQCGKGFTRSSSLLIHQAVH), 263–285 (YKCDKCGKGFTRSSSLLIHHAVH), 291–313 (YKCDKCGKGFSQSSKLHIHQRVH), 319–341 (YECEECGMSFSQRSNLHIHQRVH), 347–369 (YKCGECGKGFSQSSNLHIHRCIH), 375–397 (YQCYECGKGFSQSPDLRIHLRVH), 403–425 (YHCGKCGKGFSQSSKLLIHQRVH), and 431–453 (YECSKCGKGFSQSSNLHIHQRVH).

It belongs to the krueppel C2H2-type zinc-finger protein family.

It localises to the nucleus. Its function is as follows. May be involved in transcriptional regulation. This chain is Zinc finger protein 239 (ZNF239), found in Pongo abelii (Sumatran orangutan).